A 272-amino-acid chain; its full sequence is Phosphatidylglycerol--prolipoprotein diacylglyceryl transferase (272 aa).

Helical transmembrane passes span 17–37 (LAIR…LGFG), 59–79 (MLFF…VLFY), 95–115 (WEGG…MWLF), 129–149 (FIAP…FING), 176–196 (SQLY…WLFA), 202–222 (MGAV…AAEF), and 237–257 (LSMG…MVVW). A 1,2-diacyl-sn-glycero-3-phospho-(1'-sn-glycerol) is bound at residue Arg142.

Belongs to the Lgt family.

The protein resides in the cell inner membrane. It catalyses the reaction L-cysteinyl-[prolipoprotein] + a 1,2-diacyl-sn-glycero-3-phospho-(1'-sn-glycerol) = an S-1,2-diacyl-sn-glyceryl-L-cysteinyl-[prolipoprotein] + sn-glycerol 1-phosphate + H(+). It participates in protein modification; lipoprotein biosynthesis (diacylglyceryl transfer). In terms of biological role, catalyzes the transfer of the diacylglyceryl group from phosphatidylglycerol to the sulfhydryl group of the N-terminal cysteine of a prolipoprotein, the first step in the formation of mature lipoproteins. This Cupriavidus necator (strain ATCC 17699 / DSM 428 / KCTC 22496 / NCIMB 10442 / H16 / Stanier 337) (Ralstonia eutropha) protein is Phosphatidylglycerol--prolipoprotein diacylglyceryl transferase.